Reading from the N-terminus, the 150-residue chain is Transthyretin (150 aa).

The first 20 residues, 1–20, serve as a signal peptide directing secretion; the sequence is MAFHSTLLVFLAGLVFLSEA. A Sulfocysteine modification is found at C33. Positions 38, 77, and 140 each coordinate L-thyroxine.

Belongs to the transthyretin family. In terms of assembly, homotetramer. Dimer of dimers. In the homotetramer, subunits assemble around a central channel that can accommodate two ligand molecules. Sulfonation of the reactive cysteine Cys-33 enhances the stability of the native conformation of TTR, avoiding misassembly of the protein leading to amyloid formation. Detected in serum (at protein level). Detected in liver and choroid plexus.

It is found in the secreted. Thyroid hormone-binding protein. Probably transports thyroxine from the bloodstream to the brain. This chain is Transthyretin (TTR), found in Gallus gallus (Chicken).